A 635-amino-acid chain; its full sequence is PTS system fructose-specific EIIABC component (635 aa).

Residues 5–149 (ELLTKHTIKL…DAIIDIINQH (145 aa)) enclose the PTS EIIA type-2 domain. Residue H67 is the Tele-phosphohistidine intermediate; for EIIA activity of the active site. H67 is subject to Phosphohistidine; by HPr. The disordered stretch occupies residues 149-168 (HDKDDDEEEEEEEAAPAPAG). Residues 152-162 (DDDEEEEEEEA) show a composition bias toward acidic residues. The PTS EIIB type-2 domain maps to 172–267 (ILAVTACPTG…PQELIEKAMN (96 aa)). C178 (phosphocysteine intermediate; for EIIB activity) is an active-site residue. The residue at position 178 (C178) is a Phosphocysteine; by EIIA. Residues 273 to 293 (YQGSGGGSAASNDDEEAKGKS) are disordered. Residues 301-635 (FYKHLMSGVS…GIVKKPVTEK (335 aa)) enclose the PTS EIIC type-2 domain. Transmembrane regions (helical) follow at residues 312–332 (MLPF…WGIH), 350–370 (FIGG…FIAM), 392–412 (NAGF…VILL), 428–448 (PVLI…QFVV), 470–490 (NLVL…GGPL), 511–531 (AAIM…TTIF), 544–564 (ITCY…FAAA), 569–589 (VIPA…FFRV), and 608–628 (MLYL…LGIV).

The protein localises to the cell membrane. It carries out the reaction D-fructose(out) + N(pros)-phospho-L-histidyl-[protein] = D-fructose 1-phosphate(in) + L-histidyl-[protein]. In terms of biological role, the phosphoenolpyruvate-dependent sugar phosphotransferase system (sugar PTS), a major carbohydrate active transport system, catalyzes the phosphorylation of incoming sugar substrates concomitantly with their translocation across the cell membrane. This system is involved in fructose transport. In Bacillus subtilis (strain 168), this protein is PTS system fructose-specific EIIABC component (fruA).